The chain runs to 575 residues: Glutathione hydrolase proenzyme (575 aa).

An N-terminal signal peptide occupies residues 1-24 (MKNQTFSKALLATALSCALFNVHA). Residue Arg100 participates in L-glutamate binding. Catalysis depends on Thr376, which acts as the Nucleophile. Residues Thr394, Asn396, Glu415, Asp418, 447–448 (SS), and 468–469 (GG) contribute to the L-glutamate site.

This sequence belongs to the gamma-glutamyltransferase family. In terms of assembly, this enzyme consists of two polypeptide chains, which are synthesized in precursor form from a single polypeptide. In terms of processing, cleaved by autocatalysis into a large and a small subunit.

It is found in the periplasm. It catalyses the reaction an N-terminal (5-L-glutamyl)-[peptide] + an alpha-amino acid = 5-L-glutamyl amino acid + an N-terminal L-alpha-aminoacyl-[peptide]. The enzyme catalyses glutathione + H2O = L-cysteinylglycine + L-glutamate. The catalysed reaction is an S-substituted glutathione + H2O = an S-substituted L-cysteinylglycine + L-glutamate. The protein operates within sulfur metabolism; glutathione metabolism. This Pseudomonas sp. (strain A14) protein is Glutathione hydrolase proenzyme (ggt).